Consider the following 413-residue polypeptide: DnaJ protein homolog (413 aa).

Residues 10–75 enclose the J domain; the sequence is NTKYYEILGV…REIYDQYGED (66 aa). The CR-type zinc-finger motif lies at 133 to 217; that stretch reads GTSKKLSLSR…CKGEKVVQEK (85 aa). CXXCXGXG motif repeat units lie at residues 146 to 153, 162 to 169, 189 to 196, and 205 to 212; these read CSKCKGKG, CPGCQGSG, CNECKGTG, and CSQCKGEK. Positions 387-413 are disordered; it reads RRKQAQEAYDEDEDMHGGAQRVQCAQQ. Cysteine 410 is modified (cysteine methyl ester). A lipid anchor (S-farnesyl cysteine) is attached at cysteine 410. Positions 411–413 are cleaved as a propeptide — removed in mature form; the sequence is AQQ.

As to expression, expressed in seedlings in all tissues, but exceedingly high levels in hypocotyledons and roots.

It is found in the cell membrane. Its function is as follows. Plays a continuous role in plant development probably in the structural organization of compartments. The protein is DnaJ protein homolog (DNAJ1) of Cucumis sativus (Cucumber).